Reading from the N-terminus, the 204-residue chain is Matrix-remodeling-associated protein 7 (204 aa).

A helical transmembrane segment spans residues leucine 7 to valine 27. Residues alanine 32–leucine 148 form a disordered region. Over residues alanine 38 to proline 47 the composition is skewed to pro residues. Residues glutamate 63–alanine 103 show a composition bias toward low complexity. Residues valine 110–proline 126 show a composition bias toward basic and acidic residues. Serine 191 carries the phosphoserine modification.

The protein localises to the membrane. The chain is Matrix-remodeling-associated protein 7 (MXRA7) from Homo sapiens (Human).